The primary structure comprises 433 residues: Inorganic triphosphatase (433 aa).

Positions 2 to 202 constitute a CYTH domain; sequence AQEIELKFIV…ARGYHLAQGN (201 aa). The 216-residue stretch at 218–433 folds into the CHAD domain; the sequence is KADVEQGLEA…EPFWLHSGKR (216 aa).

It catalyses the reaction triphosphate + H2O = phosphate + diphosphate. With respect to regulation, inhibited by calcium ion and activated by magnesium ion. Involved in the hydrolysis of the beta-gamma-phosphoanhydride linkage of triphosphate-containing substrates (inorganic or nucleoside-linked). Catalyzes the hydrolysis of inorganic triphosphate (PPPi), which could be cytotoxic because of its high affinity for calcium ion, thereby interfering with calcium signaling. It also hydrolyzes slowly thiamine triphosphate (ThTP). YgiF is a specific PPPase, but it contributes only marginally to the total PPPase activity in E.coli, where the main enzyme responsible for hydrolysis of PPPi is inorganic pyrophosphatase (PPase). In Escherichia coli (strain K12), this protein is Inorganic triphosphatase (ygiF).